The primary structure comprises 122 residues: Large ribosomal subunit protein uL24 (122 aa).

The protein belongs to the universal ribosomal protein uL24 family. In terms of assembly, part of the 50S ribosomal subunit.

Functionally, one of two assembly initiator proteins, it binds directly to the 5'-end of the 23S rRNA, where it nucleates assembly of the 50S subunit. Located at the polypeptide exit tunnel on the outside of the subunit. The protein is Large ribosomal subunit protein uL24 of Methanosarcina mazei (strain ATCC BAA-159 / DSM 3647 / Goe1 / Go1 / JCM 11833 / OCM 88) (Methanosarcina frisia).